An 827-amino-acid chain; its full sequence is Cadherin-17 (827 aa).

Residues 1–25 (MVSAQLHFLCLLTLYLTCGYGEEGK) form the signal peptide. The Extracellular segment spans residues 26–786 (FSGPLKPMTF…RQDGIPTVGM (761 aa)). 7 Cadherin domains span residues 29–127 (PLKP…TFLQ), 128–243 (SKYE…APEP), 244–339 (VEIR…PPTC), 340–448 (LSPV…IPIF), 449–565 (ETSN…VPVF), 566–666 (PQRI…PPRL), and 667–776 (AKDY…RPAG). Residues Asn-148, Asn-249, Asn-418, Asn-545, Asn-573, Asn-586, and Asn-721 are each glycosylated (N-linked (GlcNAc...) asparagine). A helical transmembrane segment spans residues 787-807 (AVGILLTTFLVIGIILAVVFI). The Cytoplasmic portion of the chain corresponds to 808–827 (RMRKDKVENPQSPENKPLRS).

Highest expression is found in intestine with lower expression in spleen, bone marrow, lung and testis. No expression detected in liver, kidney, heart, brain or skeletal muscle. Expressed in precursor B-cells and myeloid cells.

The protein resides in the cell membrane. Cadherins are calcium-dependent cell adhesion proteins. They preferentially interact with themselves in a homophilic manner in connecting cells; cadherins may thus contribute to the sorting of heterogeneous cell types. LI-cadherin may have a role in the morphological organization of liver and intestine. This is Cadherin-17 (Cdh17) from Mus musculus (Mouse).